We begin with the raw amino-acid sequence, 238 residues long: MNTNVLPPPDQKAEYVERMFSRIASGYDTMNGIMTLGLDRGWRTATVALAAPPSCGRALDIGTGTGDFLVELAQWMPDGLAVGVDFTLPMMRAGLPKIAGQRAVFVAGDALALPFDDESFDAITTGFTLRNVTDIAAAFREMWRVARVGGTVACLEVARPRQPLLRFGHWVYFQRIVPLMARALGADPEAYTYLPQSARVFPPPDELAQIMREAGWSDVTYRLVGLGAAAIHTGIKRG.

Residues threonine 65, aspartate 85, and 109 to 110 (DA) each bind S-adenosyl-L-methionine.

Belongs to the class I-like SAM-binding methyltransferase superfamily. MenG/UbiE family.

It carries out the reaction a 2-demethylmenaquinol + S-adenosyl-L-methionine = a menaquinol + S-adenosyl-L-homocysteine + H(+). The protein operates within quinol/quinone metabolism; menaquinone biosynthesis; menaquinol from 1,4-dihydroxy-2-naphthoate: step 2/2. Methyltransferase required for the conversion of demethylmenaquinol (DMKH2) to menaquinol (MKH2). This chain is Demethylmenaquinone methyltransferase, found in Roseiflexus castenholzii (strain DSM 13941 / HLO8).